Here is a 395-residue protein sequence, read N- to C-terminus: NAD(P)H-quinone oxidoreductase subunit H, chloroplastic (395 aa).

The protein belongs to the complex I 49 kDa subunit family. In terms of assembly, NDH is composed of at least 16 different subunits, 5 of which are encoded in the nucleus.

The protein resides in the plastid. Its subcellular location is the chloroplast thylakoid membrane. The enzyme catalyses a plastoquinone + NADH + (n+1) H(+)(in) = a plastoquinol + NAD(+) + n H(+)(out). The catalysed reaction is a plastoquinone + NADPH + (n+1) H(+)(in) = a plastoquinol + NADP(+) + n H(+)(out). Functionally, NDH shuttles electrons from NAD(P)H:plastoquinone, via FMN and iron-sulfur (Fe-S) centers, to quinones in the photosynthetic chain and possibly in a chloroplast respiratory chain. The immediate electron acceptor for the enzyme in this species is believed to be plastoquinone. Couples the redox reaction to proton translocation, and thus conserves the redox energy in a proton gradient. This is NAD(P)H-quinone oxidoreductase subunit H, chloroplastic from Staurastrum punctulatum (Green alga).